Consider the following 256-residue polypeptide: Complex I assembly factor TIMMDC1, mitochondrial (256 aa).

Residues 1-27 (MAQSDPPKSPDPPLPTSIRNPQTPESG) form a disordered region. Helical transmembrane passes span 111 to 131 (WGWR…GLTV) and 159 to 179 (VGLL…GALI).

Belongs to the Tim17/Tim22/Tim23 family. In terms of assembly, associates with the intermediate 315 kDa subcomplex of incompletely assembled complex I.

Its subcellular location is the mitochondrion membrane. Its function is as follows. Chaperone protein involved in the assembly of the mitochondrial NADH:ubiquinone oxidoreductase complex (complex I). Participates in constructing the membrane arm of complex I. The sequence is that of Complex I assembly factor TIMMDC1, mitochondrial (timmdc1) from Xenopus laevis (African clawed frog).